We begin with the raw amino-acid sequence, 125 residues long: Large ribosomal subunit protein bL12 (125 aa).

Belongs to the bacterial ribosomal protein bL12 family. As to quaternary structure, homodimer. Part of the ribosomal stalk of the 50S ribosomal subunit. Forms a multimeric L10(L12)X complex, where L10 forms an elongated spine to which 2 to 4 L12 dimers bind in a sequential fashion. Binds GTP-bound translation factors.

In terms of biological role, forms part of the ribosomal stalk which helps the ribosome interact with GTP-bound translation factors. Is thus essential for accurate translation. The sequence is that of Large ribosomal subunit protein bL12 from Polaromonas naphthalenivorans (strain CJ2).